The following is a 425-amino-acid chain: UDP-N-acetylglucosamine 1-carboxyvinyltransferase (425 aa).

22–23 (KN) lines the phosphoenolpyruvate pocket. Arg93 is a UDP-N-acetyl-alpha-D-glucosamine binding site. Residue Cys117 is the Proton donor of the active site. The residue at position 117 (Cys117) is a 2-(S-cysteinyl)pyruvic acid O-phosphothioketal. Residues 122–126 (RPVDL), 162–165 (KVSV), Asp307, and Ile329 each bind UDP-N-acetyl-alpha-D-glucosamine.

This sequence belongs to the EPSP synthase family. MurA subfamily.

It localises to the cytoplasm. The enzyme catalyses phosphoenolpyruvate + UDP-N-acetyl-alpha-D-glucosamine = UDP-N-acetyl-3-O-(1-carboxyvinyl)-alpha-D-glucosamine + phosphate. Its pathway is cell wall biogenesis; peptidoglycan biosynthesis. In terms of biological role, cell wall formation. Adds enolpyruvyl to UDP-N-acetylglucosamine. The chain is UDP-N-acetylglucosamine 1-carboxyvinyltransferase from Pasteurella multocida (strain Pm70).